Reading from the N-terminus, the 604-residue chain is Inositol-3-phosphate synthase 1 (604 aa).

Residues G88, G89, N90, N91, D163, S198, V199, Q210, R213, S251, G252, N253, T254, S303, D327, L328, T330, N361, N362, D363, K376, G456, D457, D485, and S486 each contribute to the NAD(+) site.

This sequence belongs to the myo-inositol 1-phosphate synthase family. It depends on NAD(+) as a cofactor.

The enzyme catalyses D-glucose 6-phosphate = 1D-myo-inositol 3-phosphate. Its pathway is polyol metabolism; myo-inositol biosynthesis; myo-inositol from D-glucose 6-phosphate: step 1/2. In terms of biological role, key enzyme in myo-inositol biosynthesis pathway that catalyzes the conversion of glucose 6-phosphate to 1-myo-inositol 1-phosphate in a NAD-dependent manner. Rate-limiting enzyme in the synthesis of all inositol-containing compounds. De novo-synthesized myo-inositol is essential for incorporation into GPI (glycosylphosphatidylinositol) glycolipids during intra-erythrocytic development. The chain is Inositol-3-phosphate synthase 1 from Plasmodium falciparum (isolate 3D7).